The chain runs to 60 residues: Large ribosomal subunit protein uL30 (60 aa).

It belongs to the universal ribosomal protein uL30 family. Part of the 50S ribosomal subunit.

The sequence is that of Large ribosomal subunit protein uL30 from Streptomyces coelicolor (strain ATCC BAA-471 / A3(2) / M145).